Reading from the N-terminus, the 289-residue chain is Deoxyuridine 5'-triphosphate nucleotidohydrolase (289 aa).

Substrate is bound by residues 176-178 (RSG) and 283-284 (FG).

It belongs to the dUTPase family. Mg(2+) serves as cofactor.

It catalyses the reaction dUTP + H2O = dUMP + diphosphate + H(+). Functionally, involved in nucleotide metabolism: produces dUMP, the immediate precursor of thymidine nucleotides and decreases the intracellular concentration of dUTP to avoid uracil incorporation into viral DNA. The polypeptide is Deoxyuridine 5'-triphosphate nucleotidohydrolase (Equus caballus (Horse)).